We begin with the raw amino-acid sequence, 341 residues long: Probable cytosolic iron-sulfur protein assembly protein Ciao1 (341 aa).

WD repeat units lie at residues 12 to 51 (GHAG…RWVA), 58 to 97 (GHTR…FECN), 102 to 141 (GHDN…DQED), 151 to 190 (GHTQ…SEWE), 197 to 236 (SHSS…NALG), 255 to 294 (YHSR…DRNE), and 305 to 341 (AHSQ…VDAD).

Belongs to the WD repeat CIA1 family.

Essential component of the cytosolic iron-sulfur (Fe/S) protein assembly machinery. Required for the maturation of extramitochondrial Fe/S proteins. In Anopheles gambiae (African malaria mosquito), this protein is Probable cytosolic iron-sulfur protein assembly protein Ciao1.